Here is a 338-residue protein sequence, read N- to C-terminus: tRNA N6-adenosine threonylcarbamoyltransferase (338 aa).

H111 and H115 together coordinate Fe cation. Residues 134–138 (LVSGG), D167, G180, and N272 each bind substrate. Residue D300 participates in Fe cation binding.

The protein belongs to the KAE1 / TsaD family. Requires Fe(2+) as cofactor.

The protein localises to the cytoplasm. It catalyses the reaction L-threonylcarbamoyladenylate + adenosine(37) in tRNA = N(6)-L-threonylcarbamoyladenosine(37) in tRNA + AMP + H(+). Required for the formation of a threonylcarbamoyl group on adenosine at position 37 (t(6)A37) in tRNAs that read codons beginning with adenine. Is involved in the transfer of the threonylcarbamoyl moiety of threonylcarbamoyl-AMP (TC-AMP) to the N6 group of A37, together with TsaE and TsaB. TsaD likely plays a direct catalytic role in this reaction. This Shewanella pealeana (strain ATCC 700345 / ANG-SQ1) protein is tRNA N6-adenosine threonylcarbamoyltransferase.